The following is a 204-amino-acid chain: Ribosomal RNA small subunit methyltransferase J (204 aa).

Residues 55-56 (RD), 71-72 (ER), and Asp123 contribute to the S-adenosyl-L-methionine site.

It belongs to the methyltransferase superfamily. RsmJ family.

The protein localises to the cytoplasm. It carries out the reaction guanosine(1516) in 16S rRNA + S-adenosyl-L-methionine = N(2)-methylguanosine(1516) in 16S rRNA + S-adenosyl-L-homocysteine + H(+). Functionally, specifically methylates the guanosine in position 1516 of 16S rRNA. In Rhodopseudomonas palustris (strain TIE-1), this protein is Ribosomal RNA small subunit methyltransferase J.